Consider the following 248-residue polypeptide: Ureidoacrylate amidohydrolase RutB (248 aa).

Catalysis depends on aspartate 43, which acts as the Proton acceptor. Lysine 152 is an active-site residue. The Nucleophile role is filled by cysteine 185.

It belongs to the isochorismatase family. RutB subfamily.

It carries out the reaction (Z)-3-ureidoacrylate + H2O + H(+) = (Z)-3-aminoacrylate + NH4(+) + CO2. It catalyses the reaction (Z)-3-ureidoacrylate + H2O = (Z)-3-aminoacrylate + carbamate + H(+). The catalysed reaction is (Z)-2-methylureidoacrylate + H2O + H(+) = (Z)-2-methylaminoacrylate + NH4(+) + CO2. Its function is as follows. Hydrolyzes ureidoacrylate to form aminoacrylate and carbamate. The carbamate hydrolyzes spontaneously, thereby releasing one of the nitrogen atoms of the pyrimidine ring as ammonia and one of its carbon atoms as CO2. The protein is Ureidoacrylate amidohydrolase RutB of Serratia proteamaculans (strain 568).